The sequence spans 359 residues: Transcription elongation factor A N-terminal and central domain-containing protein (359 aa).

Residues 1–82 (MSDKNQIIAR…AKWRGFYKST (82 aa)) enclose the TFIIS N-terminal domain. The segment at 84 to 118 (CKPRQSPKVLHTNANKEESAAVSQDVSQDETSGSS) is disordered. Positions 104-118 (AVSQDVSQDETSGSS) are enriched in polar residues. Positions 182–298 (VRSKCVELLY…EHCLPQSVDG (117 aa)) constitute a TFIIS central domain.

This Mus musculus (Mouse) protein is Transcription elongation factor A N-terminal and central domain-containing protein (Tceanc).